Reading from the N-terminus, the 337-residue chain is N-acetyl-gamma-glutamyl-phosphate reductase (337 aa).

Residue Cys-155 is part of the active site.

The protein belongs to the NAGSA dehydrogenase family. Type 1 subfamily.

Its subcellular location is the cytoplasm. The enzyme catalyses N-acetyl-L-glutamate 5-semialdehyde + phosphate + NADP(+) = N-acetyl-L-glutamyl 5-phosphate + NADPH + H(+). It functions in the pathway amino-acid biosynthesis; L-arginine biosynthesis; N(2)-acetyl-L-ornithine from L-glutamate: step 3/4. Functionally, catalyzes the NADPH-dependent reduction of N-acetyl-5-glutamyl phosphate to yield N-acetyl-L-glutamate 5-semialdehyde. The protein is N-acetyl-gamma-glutamyl-phosphate reductase of Alteromonas mediterranea (strain DSM 17117 / CIP 110805 / LMG 28347 / Deep ecotype).